The sequence spans 1483 residues: Guanylyl cyclase, membrane (1483 aa).

6 helical membrane passes run Ile-50–Pro-70, Phe-143–Ala-163, Leu-168–Glu-188, Met-198–Leu-218, Ala-219–Gly-239, and Met-242–Phe-262. Residues Lys-323 to Leu-376 are disordered. A compositionally biased stretch (polar residues) spans Asp-355–Leu-376. Residues Thr-395 to Ala-517 enclose the Guanylate cyclase 1 domain. 2 disordered regions span residues Asn-598–Asn-619 and Leu-672–Phe-838. Positions Gly-610–Asn-619 are enriched in polar residues. Low complexity-rich tracts occupy residues Leu-672–Ser-684, Ser-693–Thr-712, and Asn-720–Asn-765. The segment covering Ser-772–Leu-786 has biased composition (polar residues). 6 helical membrane-spanning segments follow: residues Ile-907–Phe-927, Ile-982–Ser-1002, Val-1016–Pro-1036, Ile-1040–Phe-1060, Ser-1061–Ile-1081, and Ile-1094–Tyr-1114. A Guanylate cyclase 2 domain is found at Thr-1168–Glu-1296. 3 residues coordinate Mg(2+): Asp-1173, Ile-1174, and Asp-1217. Disordered regions lie at residues Gln-1348–Tyr-1369 and Asn-1393–Ser-1483. A compositionally biased stretch (polar residues) spans Arg-1354–Tyr-1369. The segment covering Asn-1405 to Ile-1416 has biased composition (low complexity). Acidic residues predominate over residues Asn-1432–Glu-1444. Residues Asn-1446 to Ile-1465 are compositionally biased toward low complexity.

It belongs to the adenylyl cyclase class-4/guanylyl cyclase family. Homodimer. Mg(2+) serves as cofactor.

It localises to the membrane. The enzyme catalyses GTP = 3',5'-cyclic GMP + diphosphate. Activated by guanosine 5'-3-O-(thio)triphosphate (GTPgammaS). Inhibited by calcium. Its function is as follows. Synthesizes cyclic GMP (cGMP) from GTP, after activation by heterotrimeric or monomeric G proteins. Involved in chemotaxis. In Dictyostelium discoideum (Social amoeba), this protein is Guanylyl cyclase, membrane (gca).